Here is a 287-residue protein sequence, read N- to C-terminus: Probable aquaporin PIP1-4 (287 aa).

M1 carries the post-translational modification N-acetylmethionine. The disordered stretch occupies residues 1–36 (MEGKEEDVRVGANKFPERQPIGTSAQSTDKDYKEPP). At 1–55 (MEGKEEDVRVGANKFPERQPIGTSAQSTDKDYKEPPPAPLFEPGELSSWSFYRAG) the chain is on the cytoplasmic side. The helical transmembrane segment at 56–76 (IAEFIATFLFLYITVLTVMGV) threads the bilayer. The Extracellular portion of the chain corresponds to 77-92 (KRAPNMCASVGIQGIA). A helical membrane pass occupies residues 93–113 (WAFGGMIFALVYCTAGISGGH). Topologically, residues 114–133 (INPAVTFGLFLARKLSLTRA) are cytoplasmic. The NPA 1 motif lies at 115–117 (NPA). The chain crosses the membrane as a helical span at residues 134-154 (VFYMIMQCLGAICGAGVVKGF). The Extracellular portion of the chain corresponds to 155–175 (QPTPYQTLGGGANTVAHGYTK). The chain crosses the membrane as a helical span at residues 176-196 (GSGLGAEIIGTFVLVYTVFSA). Over 197–209 (TDAKRSARDSHVP) the chain is Cytoplasmic. A helical membrane pass occupies residues 210–230 (ILAPLPIGFAVFLVHLATIPI). At 231-257 (TGTGINPARSLGAAIIYNKDHSWDDHW) the chain is on the extracellular side. The NPA 2 signature appears at 236 to 238 (NPA). A helical transmembrane segment spans residues 258–278 (IFWVGPFIGAALAALYHQIVI). Residues 279 to 287 (RAIPFKSKS) lie on the Cytoplasmic side of the membrane. Residue S285 is modified to Phosphoserine.

Belongs to the MIP/aquaporin (TC 1.A.8) family. PIP (TC 1.A.8.11) subfamily. As to expression, predominantly expressed in roots and green siliques. Also expressed above ground and in flower buds.

The protein localises to the cell membrane. In terms of biological role, aquaporins facilitate the transport of water and small neutral solutes across cell membranes. The protein is Probable aquaporin PIP1-4 (PIP1.4) of Arabidopsis thaliana (Mouse-ear cress).